Consider the following 200-residue polypeptide: 3-isopropylmalate dehydratase small subunit (200 aa).

This sequence belongs to the LeuD family. LeuD type 1 subfamily. Heterodimer of LeuC and LeuD.

The enzyme catalyses (2R,3S)-3-isopropylmalate = (2S)-2-isopropylmalate. It functions in the pathway amino-acid biosynthesis; L-leucine biosynthesis; L-leucine from 3-methyl-2-oxobutanoate: step 2/4. In terms of biological role, catalyzes the isomerization between 2-isopropylmalate and 3-isopropylmalate, via the formation of 2-isopropylmaleate. The chain is 3-isopropylmalate dehydratase small subunit from Yersinia pestis bv. Antiqua (strain Antiqua).